A 258-amino-acid polypeptide reads, in one-letter code: MARFHRPSEDEDDYEYSDLWVRENSLYDYESGSDDHVYEELRAATSGPEPSGRRASVRACASAAAVQPAARGRDRAAAAGTTVAAPAAAPARRSSSRASSRPPRAAADPPVLRPATRGSSGGAGAVAVGPPRPRAPPGANAVASGRPLAFSAAPKTPKAPWCGPTHAYNRTIFCEAVALVAAEYARQAAASVWDSDPPKSNERLDRMLKSAAIRILVCEGSGLLAAANDILAARAQRPAARGSTSGGESRLRGERARP.

The segment at 66 to 143 (VQPAARGRDR…RAPPGANAVA (78 aa)) is disordered. The span at 77–118 (AAAGTTVAAPAAAPARRSSSRASSRPPRAAADPPVLRPATRG) shows a compositional bias: low complexity. The Nuclear localization signal motif lies at 131-134 (PRPR). The Nuclear export signal motif lies at 204–216 (LDRMLKSAAIRIL). A disordered region spans residues 234–258 (RAQRPAARGSTSGGESRLRGERARP). Basic and acidic residues predominate over residues 249–258 (SRLRGERARP).

This sequence belongs to the alphaherpesvirinae VP22 tegument protein family. Interacts with gE (via C-terminus); this interaction is necessary for the recruitment of VP22 to the Golgi and its packaging into virions. Interacts with gM (via C-terminus). Interacts with VP16; this interaction allows the formation of a tripartite complex composed of VP16, VP22 and UL41/VHS. Interacts with the capsid-binding protein UL16. Interacts with host CGAS. Highly phosphorylated in the host cell. Packaging is selective for underphosphorylated forms.

It localises to the virion tegument. Its subcellular location is the host cytoplasm. It is found in the host nucleus. The protein localises to the host Golgi apparatus. Its function is as follows. Tegument protein that plays different roles during the time course of infection. Participates in both the accumulation of viral mRNAs and viral protein translation at late time of infection. Modulates the RNase activity of the virion host shutoff protein UL41 probably to ensure necessary levels of key cellular mRNAs and proteins. Plays a role in microtubule reorganization that occurs after viral infection by stabilizing microtubule network. Plays a role in the inhibition of host innate immune system by targeting the CGAS enzymatic activity which is the principal cytosolic DNA sensor that detects invading viral DNA. Acts by mediating disruption of liquid-like droplets in which CGAS is activated, thereby preventing CGAS activity. In Bovine herpesvirus 1.1 (strain Cooper) (BoHV-1), this protein is Tegument protein VP22.